The chain runs to 318 residues: Methionine import ATP-binding protein MetN (318 aa).

Residues 2–237 (IEIKDVGKIF…PEGELKKIIE (236 aa)) form the ABC transporter domain. 34 to 41 (GRSGAGKS) lines the ATP pocket.

Belongs to the ABC transporter superfamily. Methionine importer (TC 3.A.1.24) family. As to quaternary structure, the complex is composed of two ATP-binding proteins (MetN), two transmembrane proteins (MetI) and a solute-binding protein (MetQ).

The protein resides in the cell membrane. It catalyses the reaction L-methionine(out) + ATP + H2O = L-methionine(in) + ADP + phosphate + H(+). It carries out the reaction D-methionine(out) + ATP + H2O = D-methionine(in) + ADP + phosphate + H(+). Its function is as follows. Part of the ABC transporter complex MetNIQ involved in methionine import. Responsible for energy coupling to the transport system. This Clostridium tetani (strain Massachusetts / E88) protein is Methionine import ATP-binding protein MetN.